The sequence spans 204 residues: Outer-membrane lipoprotein carrier protein (204 aa).

The N-terminal stretch at 1–21 (MKKIAVTCALLSAFAVSSVWA) is a signal peptide. The interval 169–204 (QRSSYQLKSQQNGAVDMSKFTFTPPQGVTVDDQRNK) is disordered. Polar residues predominate over residues 171–181 (SSYQLKSQQNG).

Belongs to the LolA family. Monomer.

The protein localises to the periplasm. Participates in the translocation of lipoproteins from the inner membrane to the outer membrane. Only forms a complex with a lipoprotein if the residue after the N-terminal Cys is not an aspartate (The Asp acts as a targeting signal to indicate that the lipoprotein should stay in the inner membrane). In Cronobacter sakazakii (strain ATCC BAA-894) (Enterobacter sakazakii), this protein is Outer-membrane lipoprotein carrier protein.